The chain runs to 208 residues: Glutathione S-transferase 1-1 (208 aa).

Residues 1 to 80 (MDFYYLPGSA…YLVEKYGKND (80 aa)) form the GST N-terminal domain. Glutathione-binding positions include serine 9, 50-52 (HTI), and 64-66 (ESR). In terms of domain architecture, GST C-terminal spans 86 to 207 (CPKKRAVINQ…EGCLEFKKFF (122 aa)).

It belongs to the GST superfamily. Theta family. As to quaternary structure, homodimer.

It carries out the reaction RX + glutathione = an S-substituted glutathione + a halide anion + H(+). In terms of biological role, conjugation of reduced glutathione to a wide number of exogenous and endogenous hydrophobic electrophiles. The protein is Glutathione S-transferase 1-1 (GST1) of Lucilia cuprina (Green bottle fly).